Reading from the N-terminus, the 606-residue chain is Armadillo repeat-containing X-linked protein 5 (606 aa).

The disordered stretch occupies residues 1–85; it reads MIGSKTKRKA…KVKKKKDKTN (85 aa). The segment covering 15 to 26 has biased composition (polar residues); that stretch reads GASSKPGTNSPA. The segment covering 40-59 has biased composition (basic and acidic residues); that stretch reads VKAEPKEEWGNQAEARDEAV. ARM repeat units follow at residues 349–388, 470–509, 511–551, and 568–606; these read CKSR…GISP, VKFD…CLSK, QANT…NINF, and SELI…ILKL.

It belongs to the eutherian X-chromosome-specific Armcx family. In terms of tissue distribution, highly expressed in the developing neural tissues, neural crest derivatives and hind limbs.

This chain is Armadillo repeat-containing X-linked protein 5 (Armcx5), found in Mus musculus (Mouse).